Here is a 1407-residue protein sequence, read N- to C-terminus: MKDLLKFLKAQTKTEEFDAIKIALASPDMIRSWSFGEVKKPETINYRTFKPERDGLFCARIFGPVKDYECLCGKYKRLKHRGVICEKCGVEVTQTKVRRERMGHIELASPTAHIWFLKSLPSRIGLLLDMPLRDIERVLYFESYVVIEGGMTNLERQQILTEEQYLDALEEFGDEFDAKMGAEAIQALLKSMDLEQECEQLREELNETNSETKRKKLTKRIKLLEAFVQSGNKPEWMILTVLPVLPPDLRPLVPLDGGRFATSDLNDLYRRVINRNNRLKRLLDLAAPDIIVRNEKRMLQEAVDALLDNGRRGRAITGSNKRPLKSLADMIKGKQGRFRQNLLGKRVDYSGRSVITVGPYLRLHQCGLPKKMALELFKPFIYGKLELRGLATTIKAAKKMVEREEAVVWDILDEVIREHPVLLNRAPTLHRLGIQAFEPVLIEGKAIQLHPLVCAAYNADFDGDQMAVHVPLTLEAQLEARALMMSTNNILSPANGEPIIVPSQDVVLGLYYMTRDCVNAKGEGMVLTGPKEAERLYRSGLASLHARVKVRITEYEKDANGELVAKTSLKDTTVGRAILWMIVPKGLPYTIVNQALGKKAISKMLNTCYRILGLKPTVIFADQIMYTGFAYAARSGASVGIDDMVIPEKKHEIISEAEAEVAEIQEQFQSGLVTAGERYNKVIDIWAAANDRVSKAMMDNLQTETVINRDGQEEKQVSFNSIYMMADSGARGSAAQIRQLAGMRGLMAKPDGSIIETPITANFREGLNVLQYFISTHGARKGLADTALKTANSGYLTRRLVDVAQDLVVTEDDCGTHEGIMMTPVIEGGDVKEPLRDRVLGRVTAEDVLKPGTADILVPRNTLLHEQWCDLLEENSVDAVKVRSVVSCDTDFGVCAHCYGRDLARGHIINKGEAIGVIAAQSIGEPGTQLTMRTFHIGGAASRAAAESSIQVKNKGSIKLSNVKSVVNSSGKLVITSRNTELKLIDEFGRTKESYKVPYGAVLAKGDGEQVAGGETVANWDPHTMPVITEVSGFVRFTDMIDGQTITRQTDELTGLSSLVVLDSAERTAGGKDLRPALKIVDAQGNDVLIPGTDMPAQYFLPGKAIVQLEDGVQISSGDTLARIPQESGGTKDITGGLPRVADLFEARRPKEPAILAEISGIVSFGKETKGKRRLVITPVDGSDPYEEMIPKWRQLNVFEGERVERGDVISDGPEAPHDILRLRGVHAVTRYIVNEVQDVYRLQGVKINDKHIEVIVRQMLRKATIVNAGSSDFLEGEQVEYSRVKIANRELEANGKVGATYSRDLLGITKASLATESFISAASFQETTRVLTEAAVAGKRDELRGLKENVIVGRLIPAGTGYAYHQDRMRRRAAGEAPAAPQVTAEDASASLAELLNAGLGGSDNE.

Zn(2+)-binding residues include cysteine 70, cysteine 72, cysteine 85, and cysteine 88. Positions 460, 462, and 464 each coordinate Mg(2+). Residues cysteine 814, cysteine 888, cysteine 895, and cysteine 898 each contribute to the Zn(2+) site. The residue at position 972 (lysine 972) is an N6-acetyllysine.

It belongs to the RNA polymerase beta' chain family. As to quaternary structure, the RNAP catalytic core consists of 2 alpha, 1 beta, 1 beta' and 1 omega subunit. When a sigma factor is associated with the core the holoenzyme is formed, which can initiate transcription. The cofactor is Mg(2+). Zn(2+) serves as cofactor.

It carries out the reaction RNA(n) + a ribonucleoside 5'-triphosphate = RNA(n+1) + diphosphate. In terms of biological role, DNA-dependent RNA polymerase catalyzes the transcription of DNA into RNA using the four ribonucleoside triphosphates as substrates. In Escherichia coli O1:K1 / APEC, this protein is DNA-directed RNA polymerase subunit beta'.